The sequence spans 274 residues: Cytochrome c oxidase subunit 3 (274 aa).

The Cytoplasmic segment spans residues 2–15 (AHVKNHDYQILPPS). A helical membrane pass occupies residues 16–36 (IWPFFGAIGAFVMLTGAVAWM). Topologically, residues 37 to 48 (KGITFFGLPVEG) are periplasmic. A helical transmembrane segment spans residues 49-77 (PWMFLIGLVGVLYVMFGWWADVVNEGETG). Topologically, residues 78–79 (EH) are cytoplasmic. Residues 80 to 115 (TPVVRIGLQYGFILFIMSEVMFFVAWFWAFIKNALY) traverse the membrane as a helical segment. The Periplasmic segment spans residues 116 to 139 (PMGPDSPIKDGVWPPEGIVTFDPW). Residues 140-166 (HLPLINTLILLLSGVAVTWAHHAFVLE) traverse the membrane as a helical segment. Residues 167–168 (GD) are Cytoplasmic-facing. A helical membrane pass occupies residues 169–197 (RKTTINGLIVAVILGVCFTGLQAYEYSHA). Topologically, residues 198–203 (AFGLAD) are periplasmic. The chain crosses the membrane as a helical span at residues 204–237 (TVYAGAFYMATGFHGAHVIIGTIFLFVCLIRLLK). Residues 238-244 (GQMTQKQ) are Cytoplasmic-facing. The chain crosses the membrane as a helical span at residues 245–274 (HVGFEAAAWYWHFVDVVWLFLFVVIYIWGR).

The protein belongs to the cytochrome c oxidase subunit 3 family.

It localises to the cell inner membrane. The catalysed reaction is 4 Fe(II)-[cytochrome c] + O2 + 8 H(+)(in) = 4 Fe(III)-[cytochrome c] + 2 H2O + 4 H(+)(out). The protein is Cytochrome c oxidase subunit 3 (ctaE) of Paracoccus denitrificans.